The following is a 936-amino-acid chain: Aftiphilin (936 aa).

Positions 1–36 (MEPDIIRMYSSSPPPLDNGAEDDDDDEFGEFGGFSE) are disordered. The interaction with AP1G1, AP1G2, GGA1 and GGA3 stretch occupies residues 1-523 (MEPDIIRMYS…ARKSSGTGTE (523 aa)). The span at 19-29 (GAEDDDDDEFG) shows a compositional bias: acidic residues. A WXXF motif 1 motif is present at residues 28–31 (FGEF). S151 is modified (phosphoserine). 2 disordered regions span residues 197 to 216 (TDDLDNVADSKGRKPLSTHS) and 374 to 409 (KTSDDEVGSPKEESRKFTNFQSPNIDPTEENDLDDS). The segment covering 374 to 389 (KTSDDEVGSPKEESRK) has biased composition (basic and acidic residues). The tract at residues 386–610 (ESRKFTNFQS…EAWQSHRTDE (225 aa)) is interaction with AP1G1. Phosphoserine is present on S395. A WXXF motif 2 motif is present at residues 432–435 (FGDF). The short motif at 436 to 438 (GDF) is the WXXF motif 3 (partial) element. Positions 478-481 (FGEF) match the WXXF motif 4 motif. S518 carries the post-translational modification Phosphoserine. The disordered stretch occupies residues 589–637 (GDQQATESHHRKEAWQSHRTDENIDTPGTPKTHSVPSATSKGAVASGHL). Over residues 595-610 (ESHHRKEAWQSHRTDE) the composition is skewed to basic and acidic residues. The residue at position 617 (T617) is a Phosphothreonine. Residues 617–628 (TPKTHSVPSATS) show a composition bias toward polar residues. Positions 716–718 (YQW) match the CLTCL1/Clathrin-binding motif. The clathrin-binding stretch occupies residues 825 to 829 (LLNLD).

Self-associates. Interacts with GGA1 (via GAE domain). Interacts with GGA3 (via GAE domain), AP1G1 (via GAE domain) and AP1G2 (via GAE domain). Component of the aftiphilin/p200/gamma-synergin complex, at least composed of AFTPH/aftiphilin, HEATR5B/p200a and SYNRG/gamma-synergin, which plays a role in the AP1G1/AP-1-mediated protein trafficking from early to recycling endosomes. Within the complex interacts with HEATR5B/p200a and SYNRG/gamma-synergin; the interactions are direct. Interacts with AP1G1/AP-1; the interaction is required to recruit AFTPH/aftiphilin to the perinuclear region of the cell. Interacts with CLTCL1/Clathrin.

Its subcellular location is the cytoplasm. The protein localises to the perinuclear region. The protein resides in the cytoplasmic vesicle. It localises to the clathrin-coated vesicle. Functionally, component of clathrin-coated vesicles. Component of the aftiphilin/p200/gamma-synergin complex, which plays roles in AP1G1/AP-1-mediated protein trafficking including the trafficking of transferrin from early to recycling endosomes, and the membrane trafficking of furin and the lysosomal enzyme cathepsin D between the trans-Golgi network (TGN) and endosomes. This is Aftiphilin (AFTPH) from Homo sapiens (Human).